The chain runs to 248 residues: Homeotic protein ultrabithorax (248 aa).

Residues 116–125 (GTGGGGGGSA) show a composition bias toward gly residues. The tract at residues 116 to 191 (GTGGGGGGSA…GSAGVVGGAG (76 aa)) is disordered. The segment covering 126–139 (GSANGANNTANGQN) has biased composition (low complexity). Gly residues-rich tracts occupy residues 140 to 152 (TSGG…GGGM) and 182 to 191 (GSAGVVGGAG). The Antp-type hexapeptide signature appears at 241–246 (FYPWMA).

It belongs to the Antp homeobox family.

It is found in the nucleus. Its function is as follows. Sequence-specific transcription factor which is part of a developmental regulatory system that provides cells with specific positional identities on the anterior-posterior axis. Binds the consensus region 5'-TTAAT[GT][GA]-3'. This is Homeotic protein ultrabithorax (Ubx) from Musca domestica (House fly).